The primary structure comprises 106 residues: Small ribosomal subunit protein bS18 (106 aa).

The disordered stretch occupies residues 1–32; that stretch reads MRWMKIMSEDMKQEQSGEGRGGRGGPARPLAS. A compositionally biased stretch (basic and acidic residues) spans 7-21; the sequence is MSEDMKQEQSGEGRG.

This sequence belongs to the bacterial ribosomal protein bS18 family. As to quaternary structure, part of the 30S ribosomal subunit. Forms a tight heterodimer with protein bS6.

Its function is as follows. Binds as a heterodimer with protein bS6 to the central domain of the 16S rRNA, where it helps stabilize the platform of the 30S subunit. The chain is Small ribosomal subunit protein bS18 from Magnetococcus marinus (strain ATCC BAA-1437 / JCM 17883 / MC-1).